Reading from the N-terminus, the 279-residue chain is Putative pyruvate, phosphate dikinase regulatory protein (279 aa).

153-160 (GISRTSKT) provides a ligand contact to ADP.

This sequence belongs to the pyruvate, phosphate/water dikinase regulatory protein family. PDRP subfamily.

It catalyses the reaction N(tele)-phospho-L-histidyl/L-threonyl-[pyruvate, phosphate dikinase] + ADP = N(tele)-phospho-L-histidyl/O-phospho-L-threonyl-[pyruvate, phosphate dikinase] + AMP + H(+). The enzyme catalyses N(tele)-phospho-L-histidyl/O-phospho-L-threonyl-[pyruvate, phosphate dikinase] + phosphate + H(+) = N(tele)-phospho-L-histidyl/L-threonyl-[pyruvate, phosphate dikinase] + diphosphate. Bifunctional serine/threonine kinase and phosphorylase involved in the regulation of the pyruvate, phosphate dikinase (PPDK) by catalyzing its phosphorylation/dephosphorylation. This Brucella abortus (strain 2308) protein is Putative pyruvate, phosphate dikinase regulatory protein.